Consider the following 475-residue polypeptide: Fez family zinc finger protein 1 (475 aa).

The short motif at 28–43 is the Engrailed homology 1 repressor element; it reads PLAFSIERIMARTPEP. C2H2-type zinc fingers lie at residues 260–282, 288–310, 316–338, 344–366, 372–394, and 400–423; these read FTCE…MPVH, FVCK…KIIH, HKCN…TRIH, FVCE…KLTH, FKCN…MHTH, and FTCP…RKLH. The segment at 425 to 475 is disordered; sequence SSLGLTRTPTGEPSSDPPPQLQQPPPAPLPPLQPTLPPPGPLPSGLHQGHQ. The span at 427–437 shows a compositional bias: polar residues; sequence LGLTRTPTGEP. The segment covering 439–466 has biased composition (pro residues); the sequence is SDPPPQLQQPPPAPLPPLQPTLPPPGPL.

This sequence belongs to the krueppel C2H2-type zinc-finger protein family.

The protein resides in the nucleus. Its function is as follows. Transcription repressor. Involved in the axonal projection and proper termination of olfactory sensory neurons (OSN). Plays a role in rostro-caudal patterning of the diencephalon and in prethalamic formation. Expression is required in OSN to cell-autonomously regulate OSN axon projections. Regulates non-cell-autonomously the layer formation of the olfactory bulb development and the interneurons. May be required for correct rostral migration of the interneuron progenitors. The protein is Fez family zinc finger protein 1 (Fezf1) of Mus musculus (Mouse).